The chain runs to 113 residues: MLLLFCICCAFIKLVLAEVNLTFVDYAKLPPKYAELLANLTDQHGMVLFDTADVRFEAYNYLVNNITEINTDTDACLCQLLTGQYTTDCYIFDDSVYEGPENINPSTSILIKD.

A signal peptide spans 1–17 (MLLLFCICCAFIKLVLA). 3 N-linked (GlcNAc...) asparagine glycosylation sites follow: Asn-20, Asn-39, and Asn-65.

Belongs to the UPF0321 family.

The protein is UPF0321 protein C569.02c of Schizosaccharomyces pombe (strain 972 / ATCC 24843) (Fission yeast).